The following is a 165-amino-acid chain: Probable chemoreceptor glutamine deamidase CheD (165 aa).

The protein belongs to the CheD family.

The enzyme catalyses L-glutaminyl-[protein] + H2O = L-glutamyl-[protein] + NH4(+). Its function is as follows. Probably deamidates glutamine residues to glutamate on methyl-accepting chemotaxis receptors (MCPs), playing an important role in chemotaxis. In Clostridium tetani (strain Massachusetts / E88), this protein is Probable chemoreceptor glutamine deamidase CheD.